A 35-amino-acid chain; its full sequence is Jingzhaotoxin F5-21.66 (35 aa).

3 cysteine pairs are disulfide-bonded: Cys2–Cys16, Cys9–Cys21, and Cys15–Cys29.

Belongs to the neurotoxin 10 (Hwtx-1) family. 48 (Jztx-F5) subfamily. In terms of tissue distribution, expressed by the venom gland.

It is found in the secreted. Probable ion channel inhibitor. This chain is Jingzhaotoxin F5-21.66, found in Chilobrachys guangxiensis (Chinese earth tiger tarantula).